A 926-amino-acid chain; its full sequence is Glycogenin (926 aa).

UDP contacts are provided by L10, T12, Y16, and R85. UDP-alpha-D-glucose contacts are provided by L10, T12, Y16, R85, K94, D111, A112, D113, N145, S146, D184, D187, and Q188. UDP is bound by residues D111, A112, and D113. D111 provides a ligand contact to Mn(2+). Residue D113 coordinates Mn(2+). An O-linked (Glc...) tyrosine glycan is attached at Y219. Positions 236, 239, and 242 each coordinate UDP. H236 is a Mn(2+) binding site. Positions 239 and 242 each coordinate UDP-alpha-D-glucose. Disordered stretches follow at residues 379-432 (PSVS…PEMS), 452-476 (YYAHPESHRPATEHKEPEYPTLPKE), 547-584 (SIQNPTPPHPAHSQHQSHATGMGMAGQAPKSPSPPPRH), 611-749 (MSGK…ETVQ), and 768-903 (LPHA…PNTD). Over residues 386–402 (LTPPPADAAPAPAPAPV) the composition is skewed to pro residues. Polar residues predominate over residues 404-413 (TQTEQKTAQP). Residues 456-469 (PESHRPATEHKEPE) are compositionally biased toward basic and acidic residues. The segment covering 557-566 (AHSQHQSHAT) has biased composition (low complexity). Residues 655–683 (SLHSLQSVPGTPRTQYSTFGKSPRLTNAR) show a composition bias toward polar residues. Positions 692-704 (EQPEDSADGDDEN) are enriched in acidic residues. Over residues 733–745 (DRWAQTDRVKTVD) the composition is skewed to basic and acidic residues. Positions 788 to 798 (SGNGRAGGGGQ) are enriched in gly residues. Residues 800 to 812 (EAQTQHQSTYYEY) show a composition bias toward polar residues. Low complexity-rich tracts occupy residues 813 to 824 (QQQHPHSQQSRQ) and 851 to 875 (HAQGLAQAQAQAHGQPQGQGANPNL).

Belongs to the glycosyltransferase 8 family. Glycogenin subfamily. Mn(2+) serves as cofactor.

Its subcellular location is the cytoplasm. It localises to the vacuole. It catalyses the reaction L-tyrosyl-[glycogenin] + UDP-alpha-D-glucose = alpha-D-glucosyl-L-tyrosyl-[glycogenin] + UDP + H(+). The catalysed reaction is [1,4-alpha-D-glucosyl](n)-L-tyrosyl-[glycogenin] + UDP-alpha-D-glucose = [1,4-alpha-D-glucosyl](n+1)-L-tyrosyl-[glycogenin] + UDP + H(+). Self-glucosylating initiator of glycogen synthesis. It catalyzes the formation of a short alpha (1,4)-glucosyl chain covalently attached via a glucose 1-O-tyrosyl linkage to internal tyrosine residues and these chains act as primers for the elongation reaction catalyzed by glycogen synthase. This is Glycogenin from Cryptococcus neoformans var. grubii serotype A (strain H99 / ATCC 208821 / CBS 10515 / FGSC 9487) (Filobasidiella neoformans var. grubii).